We begin with the raw amino-acid sequence, 246 residues long: Protein 3F (246 aa).

The N-terminal stretch at methionine 1–alanine 19 is a signal peptide. N-linked (GlcNAc...) asparagine glycosylation occurs at asparagine 52. A compositionally biased stretch (basic and acidic residues) spans glutamate 113–alanine 124. Residues glutamate 113 to alanine 223 are disordered. Positions alanine 126–serine 145 are enriched in polar residues. Tandem repeats lie at residues serine 145–alanine 153, serine 154–alanine 162, and serine 163–alanine 171. Residues serine 145 to aspartate 176 form a 3.5 X 9 AA tandem repeats of S-P-K-[ST]-D-A-K-E-A region. Basic and acidic residues predominate over residues proline 146–threonine 177. A 4; truncated repeat occupies serine 172–aspartate 176. The segment covering serine 181–asparagine 213 has biased composition (low complexity).

The polypeptide is Protein 3F (pspG) (Dictyostelium discoideum (Social amoeba)).